We begin with the raw amino-acid sequence, 157 residues long: Heat shock protein beta-9 (157 aa).

The segment covering 1 to 17 (MQRVGSSLPSGSQSASQ) has biased composition (low complexity). 2 disordered regions span residues 1–20 (MQRVGSSLPSGSQSASQCPS) and 136–157 (PPSEAQTGPASRFRSRGSKKLA). Residues 35–148 (QRLTEDAAAV…EAQTGPASRF (114 aa)) enclose the sHSP domain. The span at 148–157 (FRSRGSKKLA) shows a compositional bias: basic residues.

This sequence belongs to the small heat shock protein (HSP20) family.

The protein resides in the cytoplasm. Its subcellular location is the nucleus. This is Heat shock protein beta-9 (HSPB9) from Bos taurus (Bovine).